Consider the following 357-residue polypeptide: Tetraacyldisaccharide 4'-kinase (357 aa).

Residue 54–61 (TVGGAGKT) coordinates ATP.

The protein belongs to the LpxK family.

It carries out the reaction a lipid A disaccharide + ATP = a lipid IVA + ADP + H(+). It participates in glycolipid biosynthesis; lipid IV(A) biosynthesis; lipid IV(A) from (3R)-3-hydroxytetradecanoyl-[acyl-carrier-protein] and UDP-N-acetyl-alpha-D-glucosamine: step 6/6. Its function is as follows. Transfers the gamma-phosphate of ATP to the 4'-position of a tetraacyldisaccharide 1-phosphate intermediate (termed DS-1-P) to form tetraacyldisaccharide 1,4'-bis-phosphate (lipid IVA). This chain is Tetraacyldisaccharide 4'-kinase, found in Rhizobium leguminosarum bv. trifolii (strain WSM2304).